A 205-amino-acid chain; its full sequence is Methylthioribulose-1-phosphate dehydratase (205 aa).

C75 lines the substrate pocket. Zn(2+) is bound by residues H93 and H95. The active-site Proton donor/acceptor is the E116. H171 lines the Zn(2+) pocket.

The protein belongs to the aldolase class II family. MtnB subfamily. Zn(2+) serves as cofactor.

The protein localises to the cytoplasm. The catalysed reaction is 5-(methylsulfanyl)-D-ribulose 1-phosphate = 5-methylsulfanyl-2,3-dioxopentyl phosphate + H2O. Its pathway is amino-acid biosynthesis; L-methionine biosynthesis via salvage pathway; L-methionine from S-methyl-5-thio-alpha-D-ribose 1-phosphate: step 2/6. Functionally, catalyzes the dehydration of methylthioribulose-1-phosphate (MTRu-1-P) into 2,3-diketo-5-methylthiopentyl-1-phosphate (DK-MTP-1-P). The protein is Methylthioribulose-1-phosphate dehydratase of Kluyveromyces lactis (strain ATCC 8585 / CBS 2359 / DSM 70799 / NBRC 1267 / NRRL Y-1140 / WM37) (Yeast).